Reading from the N-terminus, the 251-residue chain is CDP-diacylglycerol pyrophosphatase (251 aa).

Residues 4-24 traverse the membrane as a helical segment; sequence AGLLFLVMIVIAVVAAGIGYW.

It belongs to the Cdh family.

Its subcellular location is the cell inner membrane. The enzyme catalyses a CDP-1,2-diacyl-sn-glycerol + H2O = a 1,2-diacyl-sn-glycero-3-phosphate + CMP + 2 H(+). It functions in the pathway phospholipid metabolism; CDP-diacylglycerol degradation; phosphatidate from CDP-diacylglycerol: step 1/1. In Escherichia coli O7:K1 (strain IAI39 / ExPEC), this protein is CDP-diacylglycerol pyrophosphatase.